Consider the following 744-residue polypeptide: Adenosylcobalamin-dependent ribonucleoside-triphosphate reductase (744 aa).

A disulfide bridge links Cys-120 with Cys-424. Residues 148 to 159 form an effector region-1 region; sequence SMPFSFLFDQLM. The tract at residues 169–318 is effector region-2; it reads VDENINQIPK…ICNLIGKTVV (150 aa). Catalysis depends on residues Cys-413 and Glu-415. Residues 570–631 are adenosylcobalamin-binding-1; that stretch reads FHYSGYLIQR…SDNFASAGTV (62 aa). An adenosylcobalamin-binding-2 region spans residues 690 to 729; the sequence is LKQAPKEPISKEKYEKADNHITGNVEIVFEQTNEDQKGLE.

The protein belongs to the class II ribonucleoside-triphosphate reductase family. As to quaternary structure, monomer. It depends on adenosylcob(III)alamin as a cofactor.

It carries out the reaction a 2'-deoxyribonucleoside 5'-triphosphate + [thioredoxin]-disulfide + H2O = a ribonucleoside 5'-triphosphate + [thioredoxin]-dithiol. Allosterically regulated by ATP and dNTP. The polypeptide is Adenosylcobalamin-dependent ribonucleoside-triphosphate reductase (rtpR) (Lactobacillus gasseri (strain ATCC 33323 / DSM 20243 / BCRC 14619 / CIP 102991 / JCM 1131 / KCTC 3163 / NCIMB 11718 / NCTC 13722 / AM63)).